Here is a 573-residue protein sequence, read N- to C-terminus: Putative cytochrome c oxidase subunit 1-beta (573 aa).

Residues Val53–Ala73 form a helical membrane-spanning segment. His100 contributes to the Fe(II)-heme a binding site. 6 helical membrane passes run Ile103–Leu123, Trp141–Ala161, Gly188–Ile208, Ile227–Met247, Leu272–Val292, and Ile304–Val324. Cu cation-binding residues include His278 and Tyr282. The segment at residues His278 to Tyr282 is a cross-link (1'-histidyl-3'-tyrosine (His-Tyr)). 2 residues coordinate Cu cation: His327 and His328. A run of 2 helical transmembrane segments spans residues Met329–Val349 and Met373–Ile393. His411 is a heme a3 binding site. 3 consecutive transmembrane segments (helical) span residues Leu412–Trp432, Ile447–Gly467, and Ile490–Trp510. His413 serves as a coordination point for Fe(II)-heme a.

The protein belongs to the heme-copper respiratory oxidase family. As to quaternary structure, associates with subunits II, III and IV to form cytochrome c oxidase. Cu(2+) is required as a cofactor. Requires heme as cofactor.

It is found in the cell membrane. It carries out the reaction 4 Fe(II)-[cytochrome c] + O2 + 8 H(+)(in) = 4 Fe(III)-[cytochrome c] + 2 H2O + 4 H(+)(out). Its pathway is energy metabolism; oxidative phosphorylation. Cytochrome c oxidase is the component of the respiratory chain that catalyzes the reduction of oxygen to water. Subunits 1-3 form the functional core of the enzyme complex. CO I is the catalytic subunit of the enzyme. Electrons originating in cytochrome c are transferred via the copper A center of subunit 2 and heme A of subunit 1 to the bimetallic center formed by heme A3 and copper B. This Streptomyces coelicolor (strain ATCC BAA-471 / A3(2) / M145) protein is Putative cytochrome c oxidase subunit 1-beta (ctaD2).